The primary structure comprises 309 residues: Protein FdhE homolog (309 aa).

It belongs to the FdhE family.

The protein localises to the cytoplasm. In terms of biological role, necessary for formate dehydrogenase activity. The polypeptide is Protein FdhE homolog (Enterobacter sp. (strain 638)).